Here is a 233-residue protein sequence, read N- to C-terminus: Esterase FUS5 (233 aa).

Residues serine 105, aspartate 159, and histidine 187 each act as charge relay system in the active site.

This sequence belongs to the LovG family.

Its function is as follows. Esterase; part of the gene cluster that mediates the biosynthesis of the mycotoxin fusarin C. Within the cluster, FUS1, FUS2, FUS8 and FUS9 are sufficient for fusarin production. The other FUS cluster members are not essential for fusarin C biosynthesis. The sequence is that of Esterase FUS5 from Gibberella moniliformis (strain M3125 / FGSC 7600) (Maize ear and stalk rot fungus).